The following is a 74-amino-acid chain: Translation initiation factor IF-1 (74 aa).

The 72-residue stretch at 1–72 (MGKEDVIRME…TRGRIVYRKK (72 aa)) folds into the S1-like domain.

The protein belongs to the IF-1 family. In terms of assembly, component of the 30S ribosomal translation pre-initiation complex which assembles on the 30S ribosome in the order IF-2 and IF-3, IF-1 and N-formylmethionyl-tRNA(fMet); mRNA recruitment can occur at any time during PIC assembly.

Its subcellular location is the cytoplasm. Functionally, one of the essential components for the initiation of protein synthesis. Stabilizes the binding of IF-2 and IF-3 on the 30S subunit to which N-formylmethionyl-tRNA(fMet) subsequently binds. Helps modulate mRNA selection, yielding the 30S pre-initiation complex (PIC). Upon addition of the 50S ribosomal subunit IF-1, IF-2 and IF-3 are released leaving the mature 70S translation initiation complex. The chain is Translation initiation factor IF-1 from Thermotoga petrophila (strain ATCC BAA-488 / DSM 13995 / JCM 10881 / RKU-1).